A 238-amino-acid chain; its full sequence is UPF0758 protein Dtpsy_2777 (238 aa).

The MPN domain maps to 116–238; sequence VFDSPQAVQH…ALSMAEQGLV (123 aa). Positions 187, 189, and 200 each coordinate Zn(2+). The JAMM motif motif lies at 187–200; it reads HNHPSGSVQPSRAD.

This sequence belongs to the UPF0758 family.

The chain is UPF0758 protein Dtpsy_2777 from Acidovorax ebreus (strain TPSY) (Diaphorobacter sp. (strain TPSY)).